The chain runs to 344 residues: Uroporphyrinogen decarboxylase (344 aa).

Residues 26–30, Asp76, Tyr151, Ser206, and His321 contribute to the substrate site; that span reads RQAGR.

This sequence belongs to the uroporphyrinogen decarboxylase family. In terms of assembly, homodimer.

The protein localises to the cytoplasm. It carries out the reaction uroporphyrinogen III + 4 H(+) = coproporphyrinogen III + 4 CO2. Its pathway is porphyrin-containing compound metabolism; protoporphyrin-IX biosynthesis; coproporphyrinogen-III from 5-aminolevulinate: step 4/4. In terms of biological role, catalyzes the decarboxylation of four acetate groups of uroporphyrinogen-III to yield coproporphyrinogen-III. The sequence is that of Uroporphyrinogen decarboxylase from Sinorhizobium fredii (strain NBRC 101917 / NGR234).